We begin with the raw amino-acid sequence, 631 residues long: 1-deoxy-D-xylulose-5-phosphate synthase (631 aa).

Residues His-87 and 128-130 (GHS) contribute to the thiamine diphosphate site. A Mg(2+)-binding site is contributed by Asp-159. Thiamine diphosphate contacts are provided by residues 160 to 161 (GA), Asn-188, Phe-295, and Glu-377. Asn-188 provides a ligand contact to Mg(2+).

It belongs to the transketolase family. DXPS subfamily. As to quaternary structure, homodimer. Mg(2+) serves as cofactor. Requires thiamine diphosphate as cofactor.

The catalysed reaction is D-glyceraldehyde 3-phosphate + pyruvate + H(+) = 1-deoxy-D-xylulose 5-phosphate + CO2. It functions in the pathway metabolic intermediate biosynthesis; 1-deoxy-D-xylulose 5-phosphate biosynthesis; 1-deoxy-D-xylulose 5-phosphate from D-glyceraldehyde 3-phosphate and pyruvate: step 1/1. In terms of biological role, catalyzes the acyloin condensation reaction between C atoms 2 and 3 of pyruvate and glyceraldehyde 3-phosphate to yield 1-deoxy-D-xylulose-5-phosphate (DXP). This Pseudomonas putida (strain ATCC 47054 / DSM 6125 / CFBP 8728 / NCIMB 11950 / KT2440) protein is 1-deoxy-D-xylulose-5-phosphate synthase.